The following is a 149-amino-acid chain: MFSPQSRLRHAVADTFAMVVYCSVVNMLIEIFLSGMSFEQSLSSRLVAIPVNILIAWPYGVYRDLIMRVARKASPAGWAKNLADVLAYVTFQSPVYIIILLTVGAGWHQIVAAVSSNIVVSMLMGAVYGYFLDYCRRLFKVSSYHQAKA.

4 consecutive transmembrane segments (helical) span residues Phe-16–Met-36, Leu-46–Ile-66, Ala-83–Ala-105, and Ser-115–Cys-135.

The protein belongs to the AlaE exporter family.

It localises to the cell inner membrane. Functionally, exports L-alanine. The chain is L-alanine exporter AlaE from Salmonella typhimurium (strain LT2 / SGSC1412 / ATCC 700720).